Consider the following 123-residue polypeptide: Integration host factor subunit alpha (123 aa).

The protein belongs to the bacterial histone-like protein family. Heterodimer of an alpha and a beta chain.

In terms of biological role, this protein is one of the two subunits of integration host factor, a specific DNA-binding protein that functions in genetic recombination as well as in transcriptional and translational control. This Polaromonas naphthalenivorans (strain CJ2) protein is Integration host factor subunit alpha.